Consider the following 55-residue polypeptide: UPF0391 membrane protein Tbd_2772 (55 aa).

2 helical membrane passes run 1–21 (MFGW…FGFA) and 28–48 (AWIA…MLVM).

Belongs to the UPF0391 family.

It localises to the cell membrane. The protein is UPF0391 membrane protein Tbd_2772 of Thiobacillus denitrificans (strain ATCC 25259 / T1).